A 396-amino-acid chain; its full sequence is Phosphoglycerate kinase (396 aa).

Substrate contacts are provided by residues 21–23 (DFN), arginine 36, 59–62 (HLGR), arginine 118, and arginine 151. ATP-binding positions include lysine 201, glycine 292, glutamate 323, and 349-352 (GGDS).

The protein belongs to the phosphoglycerate kinase family. Monomer.

It localises to the cytoplasm. It carries out the reaction (2R)-3-phosphoglycerate + ATP = (2R)-3-phospho-glyceroyl phosphate + ADP. It participates in carbohydrate degradation; glycolysis; pyruvate from D-glyceraldehyde 3-phosphate: step 2/5. The chain is Phosphoglycerate kinase from Leptospira borgpetersenii serovar Hardjo-bovis (strain L550).